The primary structure comprises 620 residues: Probable potassium transport system protein Kup (620 aa).

Transmembrane regions (helical) follow at residues 8-28, 50-70, 102-122, 136-156, 168-188, 211-231, 246-266, 284-304, 336-356, 368-388, 393-413, and 415-435; these read VGLLVSAVGVVFGDIGTSPLY, VLSLVFWTVMLLVTVKYVILI, MLLGVIAAALFYGDSMITPAI, PDLKAYVVPITALVLTGLFAI, FGPVMCLWFVTLALLGIANIV, LMSFYALGTVVLAVTGGEALY, WFSLVLPALLLNYFGQGALLI, MVMPMVALATLATVIASQAVI, IYVPFTNWTLYFAVMALVIGF, IAVTGTMMIDTILVSFVMALL, MALVIVVAGTLLLVDFAYFAA, and IIKVAQGGWFPLFIGFISFTV.

The protein belongs to the HAK/KUP transporter (TC 2.A.72) family.

It is found in the cell inner membrane. The enzyme catalyses K(+)(in) + H(+)(in) = K(+)(out) + H(+)(out). Its function is as follows. Transport of potassium into the cell. Likely operates as a K(+):H(+) symporter. This chain is Probable potassium transport system protein Kup, found in Rhodopseudomonas palustris (strain HaA2).